Reading from the N-terminus, the 147-residue chain is Large ribosomal subunit protein bL9 (147 aa).

The protein belongs to the bacterial ribosomal protein bL9 family.

Its function is as follows. Binds to the 23S rRNA. In Mesoplasma florum (strain ATCC 33453 / NBRC 100688 / NCTC 11704 / L1) (Acholeplasma florum), this protein is Large ribosomal subunit protein bL9.